We begin with the raw amino-acid sequence, 198 residues long: GTP-binding protein Di-Ras1 (198 aa).

GTP contacts are provided by residues 17–22, 33–39, 61–65, 121–125, A151, and 151–152; these read GVGKSS, RDTYIPT, DTTGS, NKCDE, and AK. The Effector region signature appears at 36 to 44; it reads YIPTIEDTY. Residues 178-192 are compositionally biased toward basic and acidic residues; sequence DGKRSGKQKRTDRVK. The disordered stretch occupies residues 178–198; it reads DGKRSGKQKRTDRVKGKCTLM. The residue at position 195 (C195) is a Cysteine methyl ester. The S-geranylgeranyl cysteine moiety is linked to residue C195. A propeptide spans 196-198 (removed in mature form); that stretch reads TLM.

This sequence belongs to the small GTPase superfamily. Di-Ras family. In terms of tissue distribution, highly expressed in heart and brain.

It is found in the cell membrane. Functionally, displays low GTPase activity and exists predominantly in the GTP-bound form. This is GTP-binding protein Di-Ras1 (DIRAS1) from Homo sapiens (Human).